The primary structure comprises 545 residues: Membrane protein insertase YidC (545 aa).

4 helical membrane-spanning segments follow: residues 350 to 370, 424 to 444, 461 to 481, and 498 to 518; these read IIGN…AVLY, LPML…FASV, ADPY…QTYL, and PLVF…YWVV.

It belongs to the OXA1/ALB3/YidC family. Type 1 subfamily. As to quaternary structure, interacts with the Sec translocase complex via SecD. Specifically interacts with transmembrane segments of nascent integral membrane proteins during membrane integration.

The protein resides in the cell inner membrane. In terms of biological role, required for the insertion and/or proper folding and/or complex formation of integral membrane proteins into the membrane. Involved in integration of membrane proteins that insert both dependently and independently of the Sec translocase complex, as well as at least some lipoproteins. Aids folding of multispanning membrane proteins. The chain is Membrane protein insertase YidC from Neisseria gonorrhoeae (strain NCCP11945).